Here is a 298-residue protein sequence, read N- to C-terminus: Glutamyl-Q tRNA(Asp) synthetase (298 aa).

L-glutamate is bound by residues 9–13 (RFAPS) and Glu-45. Positions 12–22 (PSPSGELHFGS) match the 'HIGH' region motif. Zn(2+) is bound by residues Cys-101, Cys-103, Tyr-115, and Cys-119. L-glutamate-binding residues include Tyr-172 and Arg-190. A 'KMSKS' region motif is present at residues 228–232 (KLSKQ). Residue Lys-231 participates in ATP binding.

This sequence belongs to the class-I aminoacyl-tRNA synthetase family. GluQ subfamily. It depends on Zn(2+) as a cofactor.

Catalyzes the tRNA-independent activation of glutamate in presence of ATP and the subsequent transfer of glutamate onto a tRNA(Asp). Glutamate is transferred on the 2-amino-5-(4,5-dihydroxy-2-cyclopenten-1-yl) moiety of the queuosine in the wobble position of the QUC anticodon. In Citrobacter koseri (strain ATCC BAA-895 / CDC 4225-83 / SGSC4696), this protein is Glutamyl-Q tRNA(Asp) synthetase.